Reading from the N-terminus, the 255-residue chain is 1-(5-phosphoribosyl)-5-[(5-phosphoribosylamino)methylideneamino] imidazole-4-carboxamide isomerase (255 aa).

Asp8 functions as the Proton acceptor in the catalytic mechanism. The active-site Proton donor is Asp129.

This sequence belongs to the HisA/HisF family.

Its subcellular location is the cytoplasm. It carries out the reaction 1-(5-phospho-beta-D-ribosyl)-5-[(5-phospho-beta-D-ribosylamino)methylideneamino]imidazole-4-carboxamide = 5-[(5-phospho-1-deoxy-D-ribulos-1-ylimino)methylamino]-1-(5-phospho-beta-D-ribosyl)imidazole-4-carboxamide. The protein operates within amino-acid biosynthesis; L-histidine biosynthesis; L-histidine from 5-phospho-alpha-D-ribose 1-diphosphate: step 4/9. This Prochlorococcus marinus (strain MIT 9312) protein is 1-(5-phosphoribosyl)-5-[(5-phosphoribosylamino)methylideneamino] imidazole-4-carboxamide isomerase.